A 404-amino-acid chain; its full sequence is Phosphopentomutase (404 aa).

Residues aspartate 10, aspartate 303, histidine 308, aspartate 344, histidine 345, and histidine 356 each coordinate Mn(2+).

It belongs to the phosphopentomutase family. The cofactor is Mn(2+).

Its subcellular location is the cytoplasm. It carries out the reaction 2-deoxy-alpha-D-ribose 1-phosphate = 2-deoxy-D-ribose 5-phosphate. The catalysed reaction is alpha-D-ribose 1-phosphate = D-ribose 5-phosphate. The protein operates within carbohydrate degradation; 2-deoxy-D-ribose 1-phosphate degradation; D-glyceraldehyde 3-phosphate and acetaldehyde from 2-deoxy-alpha-D-ribose 1-phosphate: step 1/2. In terms of biological role, isomerase that catalyzes the conversion of deoxy-ribose 1-phosphate (dRib-1-P) and ribose 1-phosphate (Rib-1-P) to deoxy-ribose 5-phosphate (dRib-5-P) and ribose 5-phosphate (Rib-5-P), respectively. This chain is Phosphopentomutase, found in Shewanella putrefaciens (strain CN-32 / ATCC BAA-453).